Reading from the N-terminus, the 472-residue chain is Eukaryotic translation initiation factor 2 subunit 3, X-linked (472 aa).

Ala-2 bears the N-acetylalanine mark. A Phosphoserine modification is found at Ser-16. The 210-residue stretch at 39–248 folds into the tr-type G domain; that stretch reads QATINIGTIG…IVKKIPVPPR (210 aa). Positions 48 to 55 are G1; it reads GHVAHGKS. 51–56 is a binding site for GTP; sequence AHGKST. A G2 region spans residues 76 to 80; that stretch reads NITIK. Residues 134 to 137 are G3; sequence DCPG. GTP is bound by residues 190 to 193 and 225 to 227; these read NKID and SAQ. The interval 190–193 is G4; sequence NKID. The G5 stretch occupies residues 225-227; that stretch reads SAQ. The interval 457–469 is interacts with Cdc123; the sequence is GQIRRGVTIKPTV.

It belongs to the TRAFAC class translation factor GTPase superfamily. Classic translation factor GTPase family. EIF2G subfamily. In terms of assembly, eukaryotic translation initiation factor 2 eIF2 is a heterotrimeric complex composed of an alpha (EIF2S1), a beta (EIF2S2) and a gamma (EIF2S3) chain. eIF2 is member of the 43S pre-initiation complex (43S PIC). Interacts (via C-terminus) with CDC123; the interaction is direct. As to expression, widely expressed. In the brain, high mRNA levels are observed in specific regions, including the habenula, anterodorsal thalamic nucleus, hippocampus, hypothalamus, and cerebellum. Also expressed in the embryonic brain. There is a differential expression between males and females, which is tissue-specific. Females tend to have higher expression levels than males in the brain (cortex, hippocampus and paraventricular nucleus, but not in the habenula), as well as in other tissues. The up-regulation observed in females at the mRNA level may be due to the presence of 2 active copies of the gene.

The protein resides in the cytoplasm. The protein localises to the cytosol. The enzyme catalyses GTP + H2O = GDP + phosphate + H(+). Functionally, member of the eIF2 complex that functions in the early steps of protein synthesis by forming a ternary complex with GTP and initiator tRNA. This complex binds to a 40S ribosomal subunit, followed by mRNA binding to form the 43S pre-initiation complex (43S PIC). Junction of the 60S ribosomal subunit to form the 80S initiation complex is preceded by hydrolysis of the GTP bound to eIF2 and release of an eIF2-GDP binary complex. In order for eIF2 to recycle and catalyze another round of initiation, the GDP bound to eIF2 must exchange with GTP by way of a reaction catalyzed by eIF-2B. Along with its paralog on chromosome Y, may contribute to spermatogenesis up to the round spermatid stage. The polypeptide is Eukaryotic translation initiation factor 2 subunit 3, X-linked (Eif2s3x) (Mus musculus (Mouse)).